The following is a 94-amino-acid chain: Small ribosomal subunit protein uS19 (94 aa).

It belongs to the universal ribosomal protein uS19 family.

Protein S19 forms a complex with S13 that binds strongly to the 16S ribosomal RNA. This is Small ribosomal subunit protein uS19 from Buchnera aphidicola subsp. Cinara cedri (strain Cc).